Reading from the N-terminus, the 147-residue chain is Small ribosomal subunit protein uS12 (147 aa).

This sequence belongs to the universal ribosomal protein uS12 family. In terms of assembly, part of the 30S ribosomal subunit.

With S4 and S5 plays an important role in translational accuracy. Located at the interface of the 30S and 50S subunits. This Methanococcus vannielii (strain ATCC 35089 / DSM 1224 / JCM 13029 / OCM 148 / SB) protein is Small ribosomal subunit protein uS12.